An 836-amino-acid polypeptide reads, in one-letter code: General vesicular transport factor p115 (836 aa).

A disordered region spans residues 1 to 22 (MEFLKSGIKTVLGSTEPGQQPS). The segment covering 12–22 (LGSTEPGQQPS) has biased composition (polar residues). ARM repeat units follow at residues 24–64 (AETV…VGAQ), 65–124 (GMPP…IKTP), 126–166 (HVTL…LILV), 169–210 (MGVS…VAFE), 211–256 (NAFD…FKEG), 316–359 (RLLH…LGRV), 368–413 (PAIV…QTLL), 424–463 (STGQLLCTGLFSTDALANWFSAVALMHSLVENVALKEELL), 477–518 (TLLE…KALL), 523–577 (TMAY…IIKR), and 579–636 (GQES…LVSG). Coiled coils occupy residues 663–707 (IIRG…DQNT) and 744–806 (NMYF…EEAG). Residues 803 to 836 (EEAGSTNTLPTSNVAPSVPAAGGGSPIPSGTASR) form a disordered region. The span at 806–816 (GSTNTLPTSNV) shows a compositional bias: polar residues. Over residues 817-836 (APSVPAAGGGSPIPSGTASR) the composition is skewed to low complexity.

This sequence belongs to the VDP/USO1/EDE1 family.

The protein resides in the cytoplasm. Its subcellular location is the golgi apparatus. It localises to the golgi stack. The protein localises to the golgi stack membrane. It is found in the endoplasmic reticulum. The protein resides in the endoplasmic reticulum membrane. Essential for maintaining the architecture of the Golgi stacks and for normal organization of the transitional endoplasmic reticulum (tER). Required for both the formation of the Golgi stacks and the maintenance of the individual cisternae. This is General vesicular transport factor p115 from Drosophila melanogaster (Fruit fly).